A 229-amino-acid polypeptide reads, in one-letter code: Ribonuclease 3 (229 aa).

One can recognise an RNase III domain in the interval 4–133 (WEELQESVGF…FIGALYLDNG (130 aa)). E46 serves as a coordination point for Mg(2+). D50 is a catalytic residue. Mg(2+)-binding residues include D119 and E122. The active site involves E122. Residues 159–228 (DYKTQLQEIV…AQFAINQLTH (70 aa)) enclose the DRBM domain.

This sequence belongs to the ribonuclease III family. As to quaternary structure, homodimer. The cofactor is Mg(2+).

Its subcellular location is the cytoplasm. It carries out the reaction Endonucleolytic cleavage to 5'-phosphomonoester.. Its function is as follows. Digests double-stranded RNA. Involved in the processing of primary rRNA transcript to yield the immediate precursors to the large and small rRNAs (23S and 16S). Processes some mRNAs, and tRNAs when they are encoded in the rRNA operon. Processes pre-crRNA and tracrRNA of type II CRISPR loci if present in the organism. In Listeria innocua serovar 6a (strain ATCC BAA-680 / CLIP 11262), this protein is Ribonuclease 3.